We begin with the raw amino-acid sequence, 89 residues long: Small ribosomal subunit protein uS15 (89 aa).

The protein belongs to the universal ribosomal protein uS15 family. As to quaternary structure, part of the 30S ribosomal subunit. Forms a bridge to the 50S subunit in the 70S ribosome, contacting the 23S rRNA.

One of the primary rRNA binding proteins, it binds directly to 16S rRNA where it helps nucleate assembly of the platform of the 30S subunit by binding and bridging several RNA helices of the 16S rRNA. Its function is as follows. Forms an intersubunit bridge (bridge B4) with the 23S rRNA of the 50S subunit in the ribosome. The protein is Small ribosomal subunit protein uS15 of Colwellia psychrerythraea (strain 34H / ATCC BAA-681) (Vibrio psychroerythus).